The chain runs to 871 residues: Alanine--tRNA ligase (871 aa).

Zn(2+)-binding residues include histidine 590, histidine 594, cysteine 694, and histidine 698.

Belongs to the class-II aminoacyl-tRNA synthetase family. Zn(2+) serves as cofactor.

It localises to the cytoplasm. It carries out the reaction tRNA(Ala) + L-alanine + ATP = L-alanyl-tRNA(Ala) + AMP + diphosphate. In terms of biological role, catalyzes the attachment of alanine to tRNA(Ala) in a two-step reaction: alanine is first activated by ATP to form Ala-AMP and then transferred to the acceptor end of tRNA(Ala). Also edits incorrectly charged Ser-tRNA(Ala) and Gly-tRNA(Ala) via its editing domain. The chain is Alanine--tRNA ligase from Thermoplasma acidophilum (strain ATCC 25905 / DSM 1728 / JCM 9062 / NBRC 15155 / AMRC-C165).